The chain runs to 101 residues: Protein Tat (101 aa).

The interaction with human CREBBP stretch occupies residues Met1–Asn24. The interval Met1–Gly48 is transactivation. Zn(2+)-binding residues include Cys22, Cys25, and Cys27. Positions Cys22–Cys37 are cysteine-rich. Lys28 bears the N6-acetyllysine; by host PCAF mark. Positions 30, 33, 34, and 37 each coordinate Zn(2+). The interval Phe38–Gly48 is core. Over residues Gly48–Arg57 the composition is skewed to basic residues. The interval Gly48–His101 is disordered. Residues Arg49–Arg57 carry the Nuclear localization signal, RNA-binding (TAR), and protein transduction motif. An interaction with the host capping enzyme RNGTT region spans residues Arg49–Glu86. N6-acetyllysine; by host EP300 and GCN5L2 is present on residues Lys50 and Lys51. Asymmetric dimethylarginine; by host PRMT6 occurs at positions 52 and 53. Lys71 participates in a covalent cross-link: Glycyl lysine isopeptide (Lys-Gly) (interchain with G-Cter in ubiquitin). Basic and acidic residues predominate over residues Gly83–His101.

This sequence belongs to the lentiviruses Tat family. As to quaternary structure, interacts with host CCNT1. Associates with the P-TEFb complex composed at least of Tat, P-TEFb (CDK9 and CCNT1), TAR RNA, RNA Pol II. Recruits the HATs CREBBP, TAF1/TFIID, EP300, PCAF and GCN5L2. Interacts with host KAT5/Tip60; this interaction targets the latter to degradation. Interacts with the host deacetylase SIRT1. Interacts with host capping enzyme RNGTT; this interaction stimulates RNGTT. Binds to host KDR, and to the host integrins ITGAV/ITGB3 and ITGA5/ITGB1. Interacts with host KPNB1/importin beta-1 without previous binding to KPNA1/importin alpha-1. Interacts with EIF2AK2. Interacts with host nucleosome assembly protein NAP1L1; this interaction may be required for the transport of Tat within the nucleus, since the two proteins interact at the nuclear rim. Interacts with host C1QBP/SF2P32; this interaction involves lysine-acetylated Tat. Interacts with the host chemokine receptors CCR2, CCR3 and CXCR4. Interacts with host DPP4/CD26; this interaction may trigger an anti-proliferative effect. Interacts with host LDLR. Interacts with the host extracellular matrix metalloproteinase MMP1. Interacts with host PRMT6; this interaction mediates Tat's methylation. Interacts with, and is ubiquitinated by MDM2/Hdm2. Interacts with host PSMC3 and HTATIP2. Interacts with STAB1; this interaction may overcome SATB1-mediated repression of IL2 and IL2RA (interleukin) in T cells by binding to the same domain than HDAC1. Interacts (when acetylated) with human CDK13, thereby increasing HIV-1 mRNA splicing and promoting the production of the doubly spliced HIV-1 protein Nef. Interacts with host TBP; this interaction modulates the activity of transcriptional pre-initiation complex. Interacts with host RELA. Interacts with host PLSCR1; this interaction negatively regulates Tat transactivation activity by altering its subcellular distribution. In terms of processing, asymmetrical arginine methylation by host PRMT6 seems to diminish the transactivation capacity of Tat and affects the interaction with host CCNT1. Acetylation by EP300, CREBBP, GCN5L2/GCN5 and PCAF regulates the transactivation activity of Tat. EP300-mediated acetylation of Lys-50 promotes dissociation of Tat from the TAR RNA through the competitive binding to PCAF's bromodomain. In addition, the non-acetylated Tat's N-terminus can also interact with PCAF. PCAF-mediated acetylation of Lys-28 enhances Tat's binding to CCNT1. Lys-50 is deacetylated by SIRT1. Post-translationally, polyubiquitination by host MDM2 does not target Tat to degradation, but activates its transactivation function and fosters interaction with CCNT1 and TAR RNA. In terms of processing, phosphorylated by EIF2AK2 on serine and threonine residues adjacent to the basic region important for TAR RNA binding and function. Phosphorylation of Tat by EIF2AK2 is dependent on the prior activation of EIF2AK2 by dsRNA.

The protein localises to the host nucleus. The protein resides in the host nucleolus. It is found in the host cytoplasm. Its subcellular location is the secreted. Functionally, transcriptional activator that increases RNA Pol II processivity, thereby increasing the level of full-length viral transcripts. Recognizes a hairpin structure at the 5'-LTR of the nascent viral mRNAs referred to as the transactivation responsive RNA element (TAR) and recruits the cyclin T1-CDK9 complex (P-TEFb complex) that will in turn hyperphosphorylate the RNA polymerase II to allow efficient elongation. The CDK9 component of P-TEFb and other Tat-activated kinases hyperphosphorylate the C-terminus of RNA Pol II that becomes stabilized and much more processive. Other factors such as HTATSF1/Tat-SF1, SUPT5H/SPT5, and HTATIP2 are also important for Tat's function. Besides its effect on RNA Pol II processivity, Tat induces chromatin remodeling of proviral genes by recruiting the histone acetyltransferases (HATs) CREBBP, EP300 and PCAF to the chromatin. This also contributes to the increase in proviral transcription rate, especially when the provirus integrates in transcriptionally silent region of the host genome. To ensure maximal activation of the LTR, Tat mediates nuclear translocation of NF-kappa-B by interacting with host RELA. Through its interaction with host TBP, Tat may also modulate transcription initiation. Tat can reactivate a latently infected cell by penetrating in it and transactivating its LTR promoter. In the cytoplasm, Tat is thought to act as a translational activator of HIV-1 mRNAs. Its function is as follows. Extracellular circulating Tat can be endocytosed by surrounding uninfected cells via the binding to several surface receptors such as CD26, CXCR4, heparan sulfate proteoglycans (HSPG) or LDLR. Neurons are rarely infected, but they internalize Tat via their LDLR. Through its interaction with nuclear HATs, Tat is potentially able to control the acetylation-dependent cellular gene expression. Modulates the expression of many cellular genes involved in cell survival, proliferation or in coding for cytokines or cytokine receptors. Tat plays a role in T-cell and neurons apoptosis. Tat induced neurotoxicity and apoptosis probably contribute to neuroAIDS. Circulating Tat also acts as a chemokine-like and/or growth factor-like molecule that binds to specific receptors on the surface of the cells, affecting many cellular pathways. In the vascular system, Tat binds to ITGAV/ITGB3 and ITGA5/ITGB1 integrins dimers at the surface of endothelial cells and competes with bFGF for heparin-binding sites, leading to an excess of soluble bFGF. This Human immunodeficiency virus type 1 group M subtype B (isolate SF162) (HIV-1) protein is Protein Tat.